We begin with the raw amino-acid sequence, 266 residues long: HLA class II histocompatibility antigen, DRB1 beta chain (266 aa).

Positions 1–29 are cleaved as a signal peptide; the sequence is MVCLKLPGGSCMTALTVTLMVLSSPLALS. Positions 30–124 are beta-1; sequence GDTRPRFLWQ…VESFTVQRRV (95 aa). Residues 30-227 lie on the Extracellular side of the membrane; the sequence is GDTRPRFLWQ…RARSESAQSK (198 aa). The cysteines at positions 44 and 108 are disulfide-linked. Residue Asn48 is glycosylated (N-linked (GlcNAc...) asparagine). A peptide antigen is bound by residues Asp86, Trp90, His110, Asn111, and Arg122. Residues 125–227 are beta-2; that stretch reads QPKVTVYPSK…RARSESAQSK (103 aa). The region spanning 126 to 214 is the Ig-like C1-type domain; that stretch reads PKVTVYPSKT…EHPSVTSPLT (89 aa). Cys146 and Cys202 are joined by a disulfide. The chain crosses the membrane as a helical span at residues 228–248; sequence MLSGVGGFVLGLLFLGAGLFI. Residues 249–266 lie on the Cytoplasmic side of the membrane; it reads YFRNQKGHSGLQPTGFLS. A Glycyl lysine isopeptide (Lys-Gly) (interchain with G-Cter in ubiquitin) cross-link involves residue Lys254.

As to quaternary structure, heterotrimer that consists of an alpha chain HLA-DRA, a beta chain HLA-DRB1 and a peptide (peptide-MHCII). Newly synthesized alpha and beta chains forms a heterodimer (MHCII) that associates with the CD74/invariant chain (Ii) in the endoplasmic reticulum (ER). Ii is a trimer composed of three subunits and each subunit interacts with one MHCII dimer, blocking the peptide-binding cleft. As a result, MHCII molecules cannot bind peptides present in the ER. The complex of MHCII and CD74/Ii is transported in vesicles from ER to Golgi to lysosomes, where it encounters antigenic peptides generated via proteolysis of endocytosed antigens. MHCII dimers are dissociated from CD74/Ii by the combined action of proteolysis and HLA-DM. Lysosomal enzymes such as cathepsin, degrade CD74/Ii leaving a 24 amino acid remnant called class II-associated Ii or CLIP. Interacts (via the peptide binding cleft) with CLIP; this interaction inhibits antigen peptide binding before entry in the endosomal compartment. The displacement of CLIP and replacement by a high affinity peptide in lysosomes is performed by HLA-DM heterodimer. HLA-DM catalyzes CLIP dissociation from MHCII, stabilizes empty MHCII and mediates the selection of high affinity peptides. Interacts with HLA-DM heterodimer; this interaction is direct. Interacts with TCR (via CDR3). Interacts (via beta-2 domain) with CD4 coreceptor (via Ig-like V-type domain); this interaction is of exceptionally low affinity yet necessary for optimal recognition of antigenic peptides. In terms of assembly, (Microbial infection) Interacts with Staphylococcus aureus enterotoxin A/entA, enterotoxin B/entB, enterotoxin C1/entC1, enterotoxin D/entD and enterotoxin H/entH. Enterotoxins bind outside the peptide-binding cleft of MHCII: enterotoxin H/entH interacts via the beta-1 domain of MHCII and in a zinc-dependent way, whereas enterotoxin B/entB interacts primarily via the alpha-1 domain. (Microbial infection) Interacts with Epstein-Barr virus gp42 protein. In terms of processing, ubiquitinated by MARCHF1 and MARCHF8 at Lys-254 leading to sorting into the endosome system and down-regulation of MHCII. As to expression, expressed in professional APCs: monocyte/macrophages, dendritic cells and B cells (at protein level). Expressed in thymic epithelial cells (at protein level).

Its subcellular location is the cell membrane. The protein localises to the endoplasmic reticulum membrane. The protein resides in the lysosome membrane. It localises to the late endosome membrane. It is found in the autolysosome membrane. Functionally, a beta chain of antigen-presenting major histocompatibility complex class II (MHCII) molecule. In complex with the alpha chain HLA-DRA, displays antigenic peptides on professional antigen presenting cells (APCs) for recognition by alpha-beta T cell receptor (TCR) on HLA-DRB1-restricted CD4-positive T cells. This guides antigen-specific T-helper effector functions, both antibody-mediated immune response and macrophage activation, to ultimately eliminate the infectious agents and transformed cells. Typically presents extracellular peptide antigens of 10 to 30 amino acids that arise from proteolysis of endocytosed antigens in lysosomes. In the tumor microenvironment, presents antigenic peptides that are primarily generated in tumor-resident APCs likely via phagocytosis of apoptotic tumor cells or macropinocytosis of secreted tumor proteins. Presents peptides derived from intracellular proteins that are trapped in autolysosomes after macroautophagy, a mechanism especially relevant for T cell selection in the thymus and central immune tolerance. The selection of the immunodominant epitopes follows two processing modes: 'bind first, cut/trim later' for pathogen-derived antigenic peptides and 'cut first, bind later' for autoantigens/self-peptides. The anchor residue at position 1 of the peptide N-terminus, usually a large hydrophobic residue, is essential for high affinity interaction with MHCII molecules. Its function is as follows. Allele DRB1*01:01: Displays an immunodominant epitope derived from Bacillus anthracis pagA/protective antigen, PA (KLPLYISNPNYKVNVYAVT), to both naive and PA-specific memory CD4-positive T cells. Presents immunodominant HIV-1 gag peptide (FRDYVDRFYKTLRAEQASQE) on infected dendritic cells for recognition by TRAV24-TRBV2 TCR on CD4-positive T cells and controls viral load. May present to T-helper 1 cells several HRV-16 epitopes derived from capsid proteins VP1 (PRFSLPFLSIASAYYMFYDG) and VP2 (PHQFINLRSNNSATLIVPYV), contributing to viral clearance. Displays commonly recognized peptides derived from IAV external protein HA (PKYVKQNTLKLAT and SNGNFIAPEYAYKIVK) and from internal proteins M, NP and PB1, with M-derived epitope (GLIYNRMGAVTTEV) being the most immunogenic. Presents a self-peptide derived from COL4A3 (GWISLWKGFSF) to TCR (TRAV14 biased) on CD4-positive, FOXP3-positive regulatory T cells and mediates immune tolerance to self. May present peptides derived from oncofetal trophoblast glycoprotein TPBG 5T4, known to be recognized by both T-helper 1 and regulatory T cells. Displays with low affinity a self-peptide derived from MBP (VHFFKNIVTPRTP). Allele DRB1*03:01: May present to T-helper 1 cells an HRV-16 epitope derived from capsid protein VP2 (NEKQPSDDNWLNFDGTLLGN), contributing to viral clearance. Displays self-peptides derived from retinal SAG (NRERRGIALDGKIKHE) and thyroid TG (LSSVVVDPSIRHFDV). Presents viral epitopes derived from HHV-6B gH/U48 and U85 antigens to polyfunctional CD4-positive T cells with cytotoxic activity implicated in control of HHV-6B infection. Presents several immunogenic epitopes derived from C.tetani neurotoxin tetX, playing a role in immune recognition and long-term protection. In terms of biological role, allele DRB1*04:01: Presents an immunodominant bacterial epitope derived from M.tuberculosis esxB/culture filtrate antigen CFP-10 (EISTNIRQAGVQYSR), eliciting CD4-positive T cell effector functions such as IFNG production and cytotoxic activity. May present to T-helper 1 cells an HRV-16 epitope derived from capsid protein VP2 (NEKQPSDDNWLNFDGTLLGN), contributing to viral clearance. Presents tumor epitopes derived from melanoma-associated TYR antigen (QNILLSNAPLGPQFP and DYSYLQDSDPDSFQD), triggering CD4-positive T cell effector functions such as GMCSF production. Displays preferentially citrullinated self-peptides derived from VIM (GVYATR/citSSAVR and SAVRAR/citSSVPGVR) and ACAN (VVLLVATEGR/ CitVRVNSAYQDK). Displays self-peptides derived from COL2A1. Functionally, allele DRB1*04:02: Displays native or citrullinated self-peptides derived from VIM. Its function is as follows. Allele DRB1*04:04: May present to T-helper 1 cells several HRV-16 epitopes derived from capsid proteins VP1 (HIVMQYMYVPPGAPIPTTRN) and VP2 (RGDSTITSQDVANAVVGYGV), contributing to viral clearance. Displays preferentially citrullinated self-peptides derived from VIM (SAVRAR/citSSVPGVR). Allele DRB1*04:05: May present to T-helper 1 cells an immunogenic epitope derived from tumor-associated antigen WT1 (KRYFKLSHLQMHSRKH), likely providing for effective antitumor immunity in a wide range of solid and hematological malignancies. In terms of biological role, allele DRB1*05:01: Presents an immunodominant HIV-1 gag peptide (FRDYVDRFYKTLRAEQASQE) on infected dendritic cells for recognition by TRAV24-TRBV2 TCR on CD4-positive T cells and controls viral load. Functionally, allele DRB1*07:01: Upon EBV infection, presents latent antigen EBNA2 peptide (PRSPTVFYNIPPMPLPPSQL) to CD4-positive T cells, driving oligoclonal expansion and selection of a dominant virus-specific memory T cell subset with cytotoxic potential to directly eliminate virus-infected B cells. May present to T-helper 1 cells several HRV-16 epitopes derived from capsid proteins VP1 (PRFSLPFLSIASAYYMFYDG) and VP2 (VPYVNAVPMDSMVRHNNWSL), contributing to viral clearance. In the context of tumor immunesurveillance, may present to T-helper 1 cells an immunogenic epitope derived from tumor-associated antigen WT1 (MTEYKLVVVGAVGVGKSALTIQLI), likely providing for effective antitumor immunity in a wide range of solid and hematological malignancies. In metastatic epithelial tumors, presents to intratumoral CD4-positive T cells a KRAS neoantigen (MTEYKLVVVGAVGVGKSALTIQLI) carrying G12V hotspot driver mutation and may mediate tumor regression. Its function is as follows. Allele DRB1*11:01: Displays an immunodominant HIV-1 gag peptide (FRDYVDRFYKTLRAEQASQE) on infected dendritic cells for recognition by TRAV24-TRBV2 TCR on CD4-positive T cells and controls viral load. May present to T-helper 1 cells an HRV-16 epitope derived from capsid protein VP2 (SDRIIQITRGDSTITSQDVA), contributing to viral clearance. Presents several immunogenic epitopes derived from C.tetani neurotoxin tetX, playing a role in immune recognition and longterm protection. In the context of tumor immunesurveillance, may present tumor-derived neoantigens to CD4-positive T cells and trigger anti-tumor helper functions. Allele DRB1*13:01: Presents viral epitopes derived from HHV-6B antigens to polyfunctional CD4-positive T cells implicated in control of HHV-6B infection. In terms of biological role, allele DRB1*15:01: May present to T-helper 1 cells an HRV-16 epitope derived from capsid protein VP2 (SNNSATLIVPYVNAVPMDSM), contributing to viral clearance. Displays a self-peptide derived from MBP (ENPVVHFFKNIVTPR). May present to T-helper 1 cells an immunogenic epitope derived from tumor-associated antigen WT1 (KRYFKLSHLQMHSRKH), likely providing for effective antitumor immunity in a wide range of solid and hematological malignancies. Functionally, allele DRB1*15:02: Displays an immunodominant HIV-1 gag peptide (FRDYVDRFYKTLRAEQASQE) on infected dendritic cells for recognition by TRAV24-TRBV2 TCR on CD4-positive T cells and controls viral load. May present to T-helper 1 cells an immunogenic epitope derived from tumor-associated antigen WT1 (KRYFKLSHLQMHSRKH), likely providing for effective antitumor immunity in a wide range of solid and hematological malignancies. Its function is as follows. (Microbial infection) Acts as a receptor for Epstein-Barr virus on lymphocytes. This chain is HLA class II histocompatibility antigen, DRB1 beta chain, found in Homo sapiens (Human).